Reading from the N-terminus, the 345-residue chain is Succinylglutamate desuccinylase (345 aa).

Zn(2+) contacts are provided by His64, Glu67, and His161. Glu225 is an active-site residue.

Belongs to the AspA/AstE family. Succinylglutamate desuccinylase subfamily. The cofactor is Zn(2+).

It catalyses the reaction N-succinyl-L-glutamate + H2O = L-glutamate + succinate. It functions in the pathway amino-acid degradation; L-arginine degradation via AST pathway; L-glutamate and succinate from L-arginine: step 5/5. In terms of biological role, transforms N(2)-succinylglutamate into succinate and glutamate. The polypeptide is Succinylglutamate desuccinylase (Shewanella pealeana (strain ATCC 700345 / ANG-SQ1)).